The primary structure comprises 133 residues: Small ribosomal subunit protein bS6 (133 aa).

Positions 106 to 125 are enriched in basic and acidic residues; that stretch reads REERVERAPRAPRPEVKAEP. The disordered stretch occupies residues 106–133; sequence REERVERAPRAPRPEVKAEPEAEATAEA.

Belongs to the bacterial ribosomal protein bS6 family.

In terms of biological role, binds together with bS18 to 16S ribosomal RNA. This chain is Small ribosomal subunit protein bS6, found in Psychromonas ingrahamii (strain DSM 17664 / CCUG 51855 / 37).